A 26-amino-acid polypeptide reads, in one-letter code: Mitochondrial import receptor subunit TOM7-2 (26 aa).

The protein belongs to the Tom7 family. Forms part of the preprotein translocase complex of the outer mitochondrial membrane (TOM complex).

It is found in the mitochondrion outer membrane. Seems to act as a modulator of the dynamics of the mitochondrial protein transport machinery. Seems to promote the dissociation of subunits of the outer membrane translocase. The polypeptide is Mitochondrial import receptor subunit TOM7-2 (TOM7-2) (Solanum tuberosum (Potato)).